A 264-amino-acid chain; its full sequence is Versicolorin reductase stcU (264 aa).

Ile-23, Asp-69, Asn-96, and Arg-129 together coordinate NADP(+). Residues Ser-145 and Ser-146 each act as proton donor in the active site. NADP(+) is bound by residues Tyr-160, Lys-164, Ile-193, and Thr-195. Tyr-160 functions as the Proton acceptor in the catalytic mechanism. Lys-164 acts as the Lowers pKa of active site Tyr in catalysis.

The protein belongs to the short-chain dehydrogenases/reductases (SDR) family.

The enzyme catalyses (4S,8R)-2,13,16,20-tetrahydroxy-7,9-dioxapentacyclo[10.8.0.0(3,10).0(4,8).0(14,19)]icosa-1(12),2,5,10,13,16,19-heptaen-18-one + NADPH + H(+) = (4S,8R,16R)-2,13,16,20-tetrahydroxy-7,9-dioxapentacyclo[10.8.0.0(3,10).0(4,8).0(14,19)]icosa-1(12),2,5,10,13,19-hexaen-18-one + NADP(+). The protein operates within mycotoxin biosynthesis; sterigmatocystin biosynthesis. In terms of biological role, versicolorin reductase; part of the gene cluster that mediates the biosynthesis of sterigmatocystin (ST), a polyketide-derived furanocoumarin which is part of the most toxic and carcinogenic compounds among the known mycotoxins. The first step in the biosynthesis of sterigmatocystin is the production of hexanoate by the fatty acid synthase (FAS) units stcJ and stcK. The polyketide backbone is assembled by the non-reducing polyketide synthase stcA by condensation of the starter hexanoyl-CoA and 7 malonyl-CoA extender units followed by cyclization and release of norsolorinic acid. Norsolorinic acid is the first stable intermediate in the biosynthesis of sterigmatocystin and is converted into averantin (AVN) by the ketoreductase stcE which reduces the hexanoate ketone to an alcohol. Averantin is then oxidized into 5'-hydroxyaverantin (HAVN) by the cytochrome P450 monooxygenase stcF. 5'-hydroxyaverantin is further converted to 5'-oxyaverantin (OAVN) by the 5'-hydroxyaverantin dehydrogenase stcG. The next step is the conversion of OAVN into averufin (AVF) which is catalyzed by a yet to be identified enzyme. The cytochrome P450 monooxygenase stcB and the flavin-binding monooxygenase stcW are both required for the conversion of averufin to 1-hydroxyversicolorone. The esterase stcI probably catalyzes the formation of versiconal hemiacetal acetate from 1-hydroxyversicolorone. The oxydoreductase stcN then probably catalyzes the biosynthetic step from versiconal to versicolorin B (VERB). The next step is performed by the versicolorin B desaturase stcL to produce versicolorin A (VERA). The ketoreductase stcU and the cytochrome P450 monooxygenase stcS are involved in the conversion of versicolorin A to demethylsterigmatocystin. The Baeyer-Villiger oxidas stcQ and the reductase stcR might be involved in the biosynthetic step from versicolorin A to demethylsterigmatocystin. The final step in the biosynthesis of sterigmatocystin is the methylation of demethylsterigmatocystin catalyzed by the methyltransferase stcP. This is Versicolorin reductase stcU from Emericella nidulans (strain FGSC A4 / ATCC 38163 / CBS 112.46 / NRRL 194 / M139) (Aspergillus nidulans).